A 390-amino-acid polypeptide reads, in one-letter code: Digeranylgeranylglycerophospholipid reductase (390 aa).

10 residues coordinate FAD: Ala-18, Glu-37, Cys-48, Ala-49, Ala-51, Arg-98, Val-122, Asp-278, Gly-290, and Ile-291. Val-368 contacts a 2,3-bis-O-(geranylgeranyl)-sn-glycerol 1-phospholipid.

It belongs to the geranylgeranyl reductase family. DGGGPL reductase subfamily. FAD is required as a cofactor.

The enzyme catalyses a 2,3-bis-O-phytanyl-sn-glycerol 1-phospholipid + 8 A = a 2,3-bis-O-(geranylgeranyl)-sn-glycerol 1-phospholipid + 8 AH2. It catalyses the reaction 2,3-bis-O-(phytanyl)-sn-glycerol 1-phosphate + 8 A = 2,3-bis-O-(geranylgeranyl)-sn-glycerol 1-phosphate + 8 AH2. It carries out the reaction CDP-2,3-bis-O-(geranylgeranyl)-sn-glycerol + 8 AH2 = CDP-2,3-bis-O-(phytanyl)-sn-glycerol + 8 A. The catalysed reaction is archaetidylserine + 8 AH2 = 2,3-bis-O-phytanyl-sn-glycero-3-phospho-L-serine + 8 A. Its pathway is membrane lipid metabolism; glycerophospholipid metabolism. Is involved in the reduction of 2,3-digeranylgeranylglycerophospholipids (unsaturated archaeols) into 2,3-diphytanylglycerophospholipids (saturated archaeols) in the biosynthesis of archaeal membrane lipids. Catalyzes the formation of archaetidic acid (2,3-di-O-phytanyl-sn-glyceryl phosphate) from 2,3-di-O-geranylgeranylglyceryl phosphate (DGGGP) via the hydrogenation of each double bond of the isoprenoid chains. Is also probably able to reduce double bonds of geranyl groups in CDP-2,3-bis-O-(geranylgeranyl)-sn-glycerol and archaetidylserine, thus acting at various stages in the biosynthesis of archaeal membrane lipids. This chain is Digeranylgeranylglycerophospholipid reductase, found in Methanococcus maripaludis (strain C5 / ATCC BAA-1333).